We begin with the raw amino-acid sequence, 380 residues long: Probable tRNA sulfurtransferase (380 aa).

One can recognise a THUMP domain in the interval 58–162 (EEVIERLKKV…MAFVYAGVIE (105 aa)). Residues 178–179 (LL), 203–204 (YF), R260, G282, and Q291 contribute to the ATP site.

Belongs to the ThiI family.

It is found in the cytoplasm. The enzyme catalyses [ThiI sulfur-carrier protein]-S-sulfanyl-L-cysteine + a uridine in tRNA + 2 reduced [2Fe-2S]-[ferredoxin] + ATP + H(+) = [ThiI sulfur-carrier protein]-L-cysteine + a 4-thiouridine in tRNA + 2 oxidized [2Fe-2S]-[ferredoxin] + AMP + diphosphate. It catalyses the reaction [ThiS sulfur-carrier protein]-C-terminal Gly-Gly-AMP + S-sulfanyl-L-cysteinyl-[cysteine desulfurase] + AH2 = [ThiS sulfur-carrier protein]-C-terminal-Gly-aminoethanethioate + L-cysteinyl-[cysteine desulfurase] + A + AMP + 2 H(+). Its pathway is cofactor biosynthesis; thiamine diphosphate biosynthesis. In terms of biological role, catalyzes the ATP-dependent transfer of a sulfur to tRNA to produce 4-thiouridine in position 8 of tRNAs, which functions as a near-UV photosensor. Also catalyzes the transfer of sulfur to the sulfur carrier protein ThiS, forming ThiS-thiocarboxylate. This is a step in the synthesis of thiazole, in the thiamine biosynthesis pathway. The sulfur is donated as persulfide by IscS. This Thermoanaerobacter pseudethanolicus (strain ATCC 33223 / 39E) (Clostridium thermohydrosulfuricum) protein is Probable tRNA sulfurtransferase.